A 510-amino-acid chain; its full sequence is Crotonobetaine/carnitine--CoA ligase (510 aa).

It belongs to the ATP-dependent AMP-binding enzyme family.

It carries out the reaction 4-(trimethylamino)butanoate + ATP + CoA = 4-(trimethylamino)butanoyl-CoA + AMP + diphosphate. It catalyses the reaction crotonobetaine + ATP + CoA = crotonobetainyl-CoA + AMP + diphosphate. The catalysed reaction is (R)-carnitine + ATP + CoA = (R)-carnitinyl-CoA + AMP + diphosphate. It participates in amine and polyamine metabolism; carnitine metabolism. Catalyzes the transfer of CoA to carnitine, generating the initial carnitinyl-CoA needed for the CaiB reaction cycle. Also has activity toward crotonobetaine and gamma-butyrobetaine. This chain is Crotonobetaine/carnitine--CoA ligase, found in Shigella flexneri serotype 5b (strain 8401).